A 321-amino-acid polypeptide reads, in one-letter code: Sideroflexin-3 (321 aa).

Met-1 is subject to N-acetylmethionine. Helical transmembrane passes span 146-164 (LGTA…ALGL), 174-194 (LVGR…NIPL), 225-245 (IFQV…IPPV), and 266-286 (LQVG…CALF).

It belongs to the sideroflexin family. As to expression, widely expressed.

The protein localises to the mitochondrion membrane. It catalyses the reaction L-serine(in) = L-serine(out). Functionally, mitochondrial serine transporter that mediates transport of serine into mitochondria, an important step of the one-carbon metabolism pathway. Mitochondrial serine is converted to glycine and formate, which then exits to the cytosol where it is used to generate the charged folates that serve as one-carbon donors. In Mus musculus (Mouse), this protein is Sideroflexin-3.